We begin with the raw amino-acid sequence, 169 residues long: MIIAVYPGTFDPLTRGHEDLVRRAATLFDKVVVGIAHSRNKKPFFTIEERVDIAREVLGHYPNVEVHSFGGLLKDFVRDQNGRVIIRGLRAVSDFEYEFQMAGMNRHLLPDVETMFMTPSDQYQFISGTIVREIAQLGGDVSKFVFPSVERWLQAKAKERREQSAQGGA.

Threonine 9 provides a ligand contact to substrate. ATP is bound by residues 9–10 (TF) and histidine 17. Substrate-binding residues include lysine 41, leucine 73, and arginine 87. ATP is bound by residues 88–90 (GLR), glutamate 98, and 123–129 (YQFISGT).

The protein belongs to the bacterial CoaD family. In terms of assembly, homohexamer. The cofactor is Mg(2+).

The protein resides in the cytoplasm. It carries out the reaction (R)-4'-phosphopantetheine + ATP + H(+) = 3'-dephospho-CoA + diphosphate. It participates in cofactor biosynthesis; coenzyme A biosynthesis; CoA from (R)-pantothenate: step 4/5. Functionally, reversibly transfers an adenylyl group from ATP to 4'-phosphopantetheine, yielding dephospho-CoA (dPCoA) and pyrophosphate. The polypeptide is Phosphopantetheine adenylyltransferase (Bordetella bronchiseptica (strain ATCC BAA-588 / NCTC 13252 / RB50) (Alcaligenes bronchisepticus)).